Consider the following 322-residue polypeptide: Phosphatidylserine decarboxylase proenzyme (322 aa).

Catalysis depends on charge relay system; for autoendoproteolytic cleavage activity residues aspartate 90, histidine 147, and serine 254. Serine 254 acts as the Schiff-base intermediate with substrate; via pyruvic acid; for decarboxylase activity in catalysis. The residue at position 254 (serine 254) is a Pyruvic acid (Ser); by autocatalysis. Residues glutamate 294–serine 322 form a disordered region. Residues asparagine 306–serine 322 are compositionally biased toward basic and acidic residues.

It belongs to the phosphatidylserine decarboxylase family. PSD-B subfamily. Prokaryotic type I sub-subfamily. Heterodimer of a large membrane-associated beta subunit and a small pyruvoyl-containing alpha subunit. The cofactor is pyruvate. Is synthesized initially as an inactive proenzyme. Formation of the active enzyme involves a self-maturation process in which the active site pyruvoyl group is generated from an internal serine residue via an autocatalytic post-translational modification. Two non-identical subunits are generated from the proenzyme in this reaction, and the pyruvate is formed at the N-terminus of the alpha chain, which is derived from the carboxyl end of the proenzyme. The autoendoproteolytic cleavage occurs by a canonical serine protease mechanism, in which the side chain hydroxyl group of the serine supplies its oxygen atom to form the C-terminus of the beta chain, while the remainder of the serine residue undergoes an oxidative deamination to produce ammonia and the pyruvoyl prosthetic group on the alpha chain. During this reaction, the Ser that is part of the protease active site of the proenzyme becomes the pyruvoyl prosthetic group, which constitutes an essential element of the active site of the mature decarboxylase.

Its subcellular location is the cell membrane. The enzyme catalyses a 1,2-diacyl-sn-glycero-3-phospho-L-serine + H(+) = a 1,2-diacyl-sn-glycero-3-phosphoethanolamine + CO2. Its pathway is phospholipid metabolism; phosphatidylethanolamine biosynthesis; phosphatidylethanolamine from CDP-diacylglycerol: step 2/2. In terms of biological role, catalyzes the formation of phosphatidylethanolamine (PtdEtn) from phosphatidylserine (PtdSer). The chain is Phosphatidylserine decarboxylase proenzyme from Citrobacter koseri (strain ATCC BAA-895 / CDC 4225-83 / SGSC4696).